The sequence spans 898 residues: Chloride channel protein 2 (898 aa).

Topologically, residues methionine 1–valine 90 are cytoplasmic. The tract at residues glutamine 19 to alanine 37 is essential for channel gating by both voltage and cell volume. Threonine 23 is subject to Phosphothreonine. Residues glutamate 39 to tryptophan 52 form a modulates channel gating by both voltage and cell volume region. Helical transmembrane passes span glycine 91–tryptophan 124 and leucine 133–leucine 158. The Selectivity filter part_1 motif lies at glycine 164–proline 168. The segment at residues isoleucine 167 to leucine 174 is an intramembrane region (helical). 2 helical membrane-spanning segments follow: residues leucine 183–serine 201 and glutamate 208–leucine 226. A Selectivity filter part_2 motif is present at residues glycine 206–proline 210. Intramembrane regions (helical) lie at residues methionine 242–cysteine 254 and proline 258–isoleucine 266. The next 5 helical transmembrane spans lie at tyrosine 278–tryptophan 298, leucine 324–methionine 352, phenylalanine 361–leucine 380, alanine 432–alanine 452, and glycine 460–tryptophan 483. The short motif at glycine 460–proline 464 is the Selectivity filter part_3 element. The helical intramembrane region spans glycine 500–valine 514. Residues threonine 515–histidine 516 constitute an intramembrane region (note=Loop between two helices). An intramembrane region (helical) is located at residues threonine 517–threonine 528. The segment at residues glycine 529 to histidine 533 is an intramembrane region (note=Loop between two helices). A helical transmembrane segment spans residues isoleucine 534 to leucine 551. The Cytoplasmic segment spans residues glutamine 552–glutamine 898. A CBS 1 domain is found at methionine 587–proline 645. Over residues arginine 647–alanine 658 the composition is skewed to basic residues. A disordered region spans residues arginine 647 to serine 675. Residue serine 710 is modified to Phosphoserine. The tract at residues phenylalanine 726–methionine 766 is disordered. Positions glutamate 737–lysine 746 are enriched in basic and acidic residues. Serine 758 carries the phosphoserine modification. The CBS 2 domain occupies isoleucine 790–valine 850. A Basolateral membrane sorting motif is present at residues leucine 812 to leucine 813. The disordered stretch occupies residues serine 856–glutamine 898.

It belongs to the chloride channel (TC 2.A.49) family. ClC-2/CLCN2 subfamily. Homodimer. Interacts with auxiliary subunit HEPACAM. Phosphorylated. Activated by dephosphorylation. As to expression, ubiquitously expressed.

It is found in the cell membrane. Its subcellular location is the basolateral cell membrane. The protein localises to the cell projection. It localises to the dendritic spine membrane. The protein resides in the axon. The enzyme catalyses chloride(in) = chloride(out). It carries out the reaction thiocyanate(in) = thiocyanate(out). It catalyses the reaction bromide(in) = bromide(out). The catalysed reaction is nitrate(in) = nitrate(out). The enzyme catalyses iodide(out) = iodide(in). Its activity is regulated as follows. Common gate kinetics are down-regulated by intracellular ATP. Inhibited by AK-42, a derivative of meclofenamate. Inhibited by Cd(2+). Inhibited by Zn(2+) and PKC activation. Inhibited at acidic pH. CCLN2:HEPACAM channel conductance is up-regulated upon hypo-osmolarity. Voltage-gated and osmosensitive chloride channel. Forms a homodimeric channel where each subunit has its own ion conduction pathway. Conducts double-barreled currents controlled by two types of gates, two fast glutamate gates that control each subunit independently and a slow common gate that opens and shuts off both subunits simultaneously. Displays inward rectification currents activated upon membrane hyperpolarization and extracellular hypotonicity. Contributes to chloride conductance involved in neuron excitability. In hippocampal neurons, generates a significant part of resting membrane conductance and provides an additional chloride efflux pathway to prevent chloride accumulation in dendrites upon GABA receptor activation. In glia, associates with the auxiliary subunit HEPACAM/GlialCAM at astrocytic processes and myelinated fiber tracts where it may regulate transcellular chloride flux buffering extracellular chloride and potassium concentrations. Regulates aldosterone production in adrenal glands. The opening of CLCN2 channels at hyperpolarized membrane potentials in the glomerulosa causes cell membrane depolarization, activation of voltage-gated calcium channels and increased expression of aldosterone synthase, the rate-limiting enzyme for aldosterone biosynthesis. Contributes to chloride conductance in retinal pigment epithelium involved in phagocytosis of shed photoreceptor outer segments and photoreceptor renewal. Conducts chloride currents at the basolateral membrane of epithelial cells with a role in chloride reabsorption rather than secretion. Permeable to small monovalent anions with chloride &gt; thiocyanate &gt; bromide &gt; nitrate &gt; iodide ion selectivity. The polypeptide is Chloride channel protein 2 (CLCN2) (Oryctolagus cuniculus (Rabbit)).